The chain runs to 276 residues: Small ribosomal subunit protein uS3 (276 aa).

The 70-residue stretch at 17–86 (VDEYLAKELD…NPQIDVQDVG (70 aa)) folds into the KH type-2 domain. Residues 193–276 (FQINAPPKEP…AETHGDIQDR (84 aa)) are disordered. The segment covering 214–227 (EAEPSQAAETQEQQ) has biased composition (low complexity). Composition is skewed to basic and acidic residues over residues 228–240 (AGEK…RLLD) and 258–276 (PESR…IQDR).

This sequence belongs to the universal ribosomal protein uS3 family. In terms of assembly, part of the 30S ribosomal subunit.

Its function is as follows. Binds the lower part of the 30S subunit head. In Methanothrix thermoacetophila (strain DSM 6194 / JCM 14653 / NBRC 101360 / PT) (Methanosaeta thermophila), this protein is Small ribosomal subunit protein uS3.